The sequence spans 502 residues: Cyclin-dependent kinase 19 (502 aa).

The residue at position 1 (Met-1) is an N-acetylmethionine. Residues 21–335 enclose the Protein kinase domain; sequence EYEGCKVGRG…SEQALQDPYF (315 aa). ATP-binding positions include 27–35 and Lys-52; that span reads VGRGTYGHV. Asp-151 functions as the Proton acceptor in the catalytic mechanism. Residues 359 to 502 form a disordered region; sequence LNEDDPEEKG…YHPSHQAHRY (144 aa). The segment covering 371 to 392 has biased composition (low complexity); that stretch reads NQQQQQNQHQQPTAPPQQAAAP. A compositionally biased stretch (gly residues) spans 408 to 421; the sequence is TAGGAGAGVGGTGA. Over residues 424–435 the composition is skewed to polar residues; that stretch reads QHSQDSSLNQVP. Ser-449 carries the post-translational modification Phosphoserine. Residues 458 to 467 show a composition bias toward polar residues; it reads YQHSSSRLNY. Low complexity predominate over residues 468 to 496; that stretch reads QSSVQGSSQSQSTLGYSSSSQQSSQYHPS.

This sequence belongs to the protein kinase superfamily. CMGC Ser/Thr protein kinase family. CDC2/CDKX subfamily.

It localises to the cytoplasm. The protein localises to the perinuclear region. It is found in the nucleus. The catalysed reaction is L-seryl-[protein] + ATP = O-phospho-L-seryl-[protein] + ADP + H(+). It carries out the reaction L-threonyl-[protein] + ATP = O-phospho-L-threonyl-[protein] + ADP + H(+). The chain is Cyclin-dependent kinase 19 (CDK19) from Homo sapiens (Human).